We begin with the raw amino-acid sequence, 194 residues long: Isopentenyl-diphosphate Delta-isomerase (194 aa).

Mn(2+)-binding residues include His35 and His42. Positions 40-174 constitute a Nudix hydrolase domain; it reads PLHLAFSSYL…PWALSPWSVD (135 aa). Cys77 is an active-site residue. His79 serves as a coordination point for Mn(2+). Glu97 lines the Mg(2+) pocket. Mn(2+)-binding residues include Glu124 and Glu126. Glu126 is a catalytic residue.

The protein belongs to the IPP isomerase type 1 family. Requires Mg(2+) as cofactor. Mn(2+) serves as cofactor.

The protein resides in the cytoplasm. It carries out the reaction isopentenyl diphosphate = dimethylallyl diphosphate. It functions in the pathway isoprenoid biosynthesis; dimethylallyl diphosphate biosynthesis; dimethylallyl diphosphate from isopentenyl diphosphate: step 1/1. In terms of biological role, catalyzes the 1,3-allylic rearrangement of the homoallylic substrate isopentenyl (IPP) to its highly electrophilic allylic isomer, dimethylallyl diphosphate (DMAPP). The chain is Isopentenyl-diphosphate Delta-isomerase from Frankia alni (strain DSM 45986 / CECT 9034 / ACN14a).